Consider the following 345-residue polypeptide: 3-dehydroquinate synthase (345 aa).

This sequence belongs to the archaeal-type DHQ synthase family.

It catalyses the reaction 2-amino-2,3,7-trideoxy-D-lyxo-hept-6-ulosonate + NAD(+) + H2O = 3-dehydroquinate + NH4(+) + NADH + H(+). Catalyzes the oxidative deamination and cyclization of 2-amino-3,7-dideoxy-D-threo-hept-6-ulosonic acid (ADH) to yield 3-dehydroquinate (DHQ), which is fed into the canonical shikimic pathway of aromatic amino acid biosynthesis. The polypeptide is 3-dehydroquinate synthase (Methanocorpusculum labreanum (strain ATCC 43576 / DSM 4855 / Z)).